Consider the following 308-residue polypeptide: 3'(2'),5'-bisphosphate nucleotidase 1 (308 aa).

Ala-2 is modified (N-acetylalanine). Asp-51 serves as the catalytic Proton acceptor. Glu-74, Asp-117, Val-119, and Asp-120 together coordinate Mg(2+). The Proton acceptor role is filled by Thr-122. A Phosphothreonine modification is found at Thr-122. 4 residues coordinate AMP: Thr-195, His-198, Gly-220, and Lys-224. Ser-240 is subject to Phosphoserine. Lys-244 is subject to N6-succinyllysine. A Mg(2+)-binding site is contributed by Asp-247.

This sequence belongs to the inositol monophosphatase superfamily. The cofactor is Mg(2+). In terms of tissue distribution, highly expressed in heart, brain, spleen, lung, liver, skeletal muscle, kidney and testis.

It catalyses the reaction adenosine 3',5'-bisphosphate + H2O = AMP + phosphate. It carries out the reaction adenosine 2',5'-bisphosphate + H2O = AMP + phosphate. The catalysed reaction is 3'-phosphoadenylyl sulfate + H2O = adenosine 5'-phosphosulfate + phosphate. The enzyme catalyses 1D-myo-inositol 1,4-bisphosphate + H2O = 1D-myo-inositol 4-phosphate + phosphate. It catalyses the reaction 1D-myo-inositol 1,3,4-trisphosphate + H2O = 1D-myo-inositol 3,4-bisphosphate + phosphate. Its activity is regulated as follows. Inhibited by Li(+) and Ca(2+), but not by Na(+). Functionally, phosphatase that converts 3'(2')-phosphoadenosine 5'-phosphate (PAP) to AMP and adenosine 3'-phosphate 5'-phosphosulfate (PAPS) to adenosine 5'-phosphosulfate (APS). Is also able to hydrolyze inositol 1,4-bisphosphate (Ins(1,4)P2) and inositol 1,3,4-trisphosphate (Ins(1,3,4)P3), but is not active on AMP, 3'-AMP, fructose-1,6-bisphosphate, Ins(1)P, Ins(2)P and Ins(1,4,5)P3. Probably prevents the toxic accumulation of PAP, a compound which inhibits a variety of proteins, including PAPS-utilizing enzymes such as sulfotransferases, and RNA processing enzymes. Could also play a role in inositol recycling and phosphoinositide metabolism. This chain is 3'(2'),5'-bisphosphate nucleotidase 1 (Bpnt1), found in Rattus norvegicus (Rat).